The chain runs to 351 residues: Transcription elongation factor A N-terminal and central domain-containing protein (351 aa).

The region spanning 5 to 82 (NQIAARASLI…SKWKAVYKQT (78 aa)) is the TFIIS N-terminal domain. Disordered regions lie at residues 86–119 (ARNS…GICS) and 144–169 (LKPK…LLDP). A compositionally biased stretch (polar residues) spans 103 to 119 (SGPSHDPSQNETLGICS). Residues 145–165 (KPKEEHFGDGDPESTGKRSSE) show a composition bias toward basic and acidic residues. Residues 173-289 (MRTKCIELLY…EHYLPQVIDG (117 aa)) form the TFIIS central domain.

This Homo sapiens (Human) protein is Transcription elongation factor A N-terminal and central domain-containing protein (TCEANC).